The sequence spans 86 residues: ATP synthase subunit c (86 aa).

2 helical membrane-spanning segments follow: residues 13–33 (FFAT…AGLA) and 63–83 (ILGQ…AFIL).

The protein belongs to the ATPase C chain family. As to quaternary structure, F-type ATPases have 2 components, F(1) - the catalytic core - and F(0) - the membrane proton channel. F(1) has five subunits: alpha(3), beta(3), gamma(1), delta(1), epsilon(1). F(0) has three main subunits: a(1), b(2) and c(10-14). The alpha and beta chains form an alternating ring which encloses part of the gamma chain. F(1) is attached to F(0) by a central stalk formed by the gamma and epsilon chains, while a peripheral stalk is formed by the delta and b chains.

The protein resides in the cell membrane. Functionally, f(1)F(0) ATP synthase produces ATP from ADP in the presence of a proton or sodium gradient. F-type ATPases consist of two structural domains, F(1) containing the extramembraneous catalytic core and F(0) containing the membrane proton channel, linked together by a central stalk and a peripheral stalk. During catalysis, ATP synthesis in the catalytic domain of F(1) is coupled via a rotary mechanism of the central stalk subunits to proton translocation. Its function is as follows. Key component of the F(0) channel; it plays a direct role in translocation across the membrane. A homomeric c-ring of between 10-14 subunits forms the central stalk rotor element with the F(1) delta and epsilon subunits. The polypeptide is ATP synthase subunit c (Acholeplasma laidlawii (strain PG-8A)).